The sequence spans 122 residues: Replication factor A protein 3 (122 aa).

The protein belongs to the replication factor A protein 3 family. In terms of assembly, component of the heterotrimeric canonical replication protein A complex (RPA). The N-terminus is blocked.

It localises to the nucleus. In terms of biological role, as part of the replication protein A (RPA/RP-A), a single-stranded DNA-binding heterotrimeric complex, may play an essential role in DNA replication, recombination and repair. Binds and stabilizes single-stranded DNA intermediates, preventing complementary DNA reannealing and recruiting different proteins involved in DNA metabolism. Stimulates the activity of a cognate strand exchange protein (SEP1). In Saccharomyces cerevisiae (strain ATCC 204508 / S288c) (Baker's yeast), this protein is Replication factor A protein 3 (RFA3).